The chain runs to 51 residues: Insulin (51 aa).

3 cysteine pairs are disulfide-bonded: cysteine 7–cysteine 37, cysteine 19–cysteine 50, and cysteine 36–cysteine 41.

It belongs to the insulin family. Heterodimer of a B chain and an A chain linked by two disulfide bonds.

It localises to the secreted. Insulin decreases blood glucose concentration. It increases cell permeability to monosaccharides, amino acids and fatty acids. It accelerates glycolysis, the pentose phosphate cycle, and glycogen synthesis in liver. In Hystrix cristata (North African crested porcupine), this protein is Insulin (INS).